Reading from the N-terminus, the 341-residue chain is Glycerol-3-phosphate dehydrogenase [NAD(P)+] (341 aa).

NADPH is bound by residues S14, F15, R35, and K108. The sn-glycerol 3-phosphate site is built by K108 and G136. An NADPH-binding site is contributed by A140. Sn-glycerol 3-phosphate contacts are provided by K191, D244, S254, R255, and N256. The Proton acceptor role is filled by K191. R255 contributes to the NADPH binding site. Residues V279 and E281 each contribute to the NADPH site.

It belongs to the NAD-dependent glycerol-3-phosphate dehydrogenase family.

It localises to the cytoplasm. The catalysed reaction is sn-glycerol 3-phosphate + NAD(+) = dihydroxyacetone phosphate + NADH + H(+). It catalyses the reaction sn-glycerol 3-phosphate + NADP(+) = dihydroxyacetone phosphate + NADPH + H(+). Its pathway is membrane lipid metabolism; glycerophospholipid metabolism. In terms of biological role, catalyzes the reduction of the glycolytic intermediate dihydroxyacetone phosphate (DHAP) to sn-glycerol 3-phosphate (G3P), the key precursor for phospholipid synthesis. This chain is Glycerol-3-phosphate dehydrogenase [NAD(P)+], found in Pseudomonas putida (strain ATCC 47054 / DSM 6125 / CFBP 8728 / NCIMB 11950 / KT2440).